A 123-amino-acid chain; its full sequence is Ribonuclease P protein component 2 (123 aa).

The protein belongs to the eukaryotic/archaeal RNase P protein component 2 family. Consists of a catalytic RNA component and at least 4 protein subunits.

It carries out the reaction Endonucleolytic cleavage of RNA, removing 5'-extranucleotides from tRNA precursor.. Its function is as follows. Part of ribonuclease P, a protein complex that generates mature tRNA molecules by cleaving their 5'-ends. This Aeropyrum pernix (strain ATCC 700893 / DSM 11879 / JCM 9820 / NBRC 100138 / K1) protein is Ribonuclease P protein component 2.